The sequence spans 327 residues: MLRLIVNYPLIPKISHRVCSNSSSKLGSYYDSSSIIKYGGISDVVGKKQELFLSVSVKAVEDKGNNGGGSMSFSGQSWDPSSEIEVPSDQRPVNEYSSLKEGMLYSWGELGPSEFFIRLGGLWLVTFTVLGVPVAAASFNPSREPLRFILAAGTGTLFLVSLIVLRIYLGWSYVGDRLLSAVIPYEESGWYDGQMWVKPPEVLARDRLLGSYKVKPVIKMLKQTLIGTGALLVSAFVLFVFATPVEDFFKTTLGSTENQPEVSISRTSNKFNIRKEQLLRLPVDVVTDDDLAAAAAEAADGRPVYCRDRYYRALAGGQYCKWEDLVK.

The N-terminal 59 residues, 1 to 59 (MLRLIVNYPLIPKISHRVCSNSSSKLGSYYDSSSIIKYGGISDVVGKKQELFLSVSVKA), are a transit peptide targeting the chloroplast. The interval 66 to 88 (NGGGSMSFSGQSWDPSSEIEVPS) is disordered. Helical transmembrane passes span 119-139 (LGGL…AASF), 148-168 (FILA…LRIY), and 225-245 (LIGT…ATPV).

In terms of tissue distribution, mostly expressed in seeds, leaves and flowers, and, to a lower extent, in roots.

The protein resides in the membrane. It localises to the plastid. Its subcellular location is the chloroplast. In terms of biological role, required for growth in low iron conditions. The polypeptide is Protein CONSERVED IN THE GREEN LINEAGE AND DIATOMS 27, chloroplastic (Arabidopsis thaliana (Mouse-ear cress)).